The sequence spans 549 residues: MAQLAGQPILILPEGTQRYVGRDAQRMNILAARIIAETVRTTLGPKGMDKMLVDSLGDIVITNDGATILDEMDIQHPAAKMMVEVAKTQDKEAGDGTTTAVVIAGELLKKAEELLDQNIHPSIIIKGYTLASQKAQEILDSIAKEVKPDDEEVLLKAAMTAITGKAAEEEREYLAKLAVEAVKLVAEEKDGKLKVDIDNIKLEKKEGGAVRDTRLIRGVVIDKEVVHPGMPKRIENAKIALINDALEVKETETDAEIRITSPEQLQAFLEQEEKMLKEMVDKIKEVGANVVFVQKGIDDLAQHYLAKYGILAVRRVKKSDMEKLAKATGAKIVTNIRDLTPEDLGEAELVEERKVAGENMIFVEGCKNPKAVTILIRGGTEHVVDEVERALEDAIKVVKDILEDGKIIAGGGASEIELSIKLDEYAKEVGGKEQLAIEAFAEALKVIPRTLAENAGLDPIETLVKVIAAHKEKGQTIGIDVYEGEPADMMERGVIEPVRVKKQAIKSASEAAIMILRIDDVIAASKLEKEKEGEKGGGSEEFSGSSDLD.

The segment covering 528–538 (EKEKEGEKGGG) has biased composition (basic and acidic residues). The tract at residues 528–549 (EKEKEGEKGGGSEEFSGSSDLD) is disordered. Residues 540-549 (EEFSGSSDLD) show a composition bias toward low complexity.

It belongs to the TCP-1 chaperonin family. In terms of assembly, forms an oligomeric complex of eight-membered rings.

Its function is as follows. Molecular chaperone; binds unfolded polypeptides in vitro, and has a weak ATPase activity. The polypeptide is Thermosome subunit (ths) (Pyrococcus horikoshii (strain ATCC 700860 / DSM 12428 / JCM 9974 / NBRC 100139 / OT-3)).